The primary structure comprises 24 residues: LTNKTARFLVNGTSIPEVDFDVGE.

2 N-linked (GlcNAc...) asparagine glycosylation sites follow: Asn3 and Asn11.

This sequence belongs to the peptidase S10 family. In terms of assembly, monomer. In terms of processing, contains both N- and O-linked sugar chains. The N-linked oligosaccharides are unique structures of Man(10)GlcNAc(2) and Man(11)GlcNAc(2). Deglycosylation does neither affect catalytic activity, pH, thermal stability, or resistance to proteolysis of the enzyme.

The protein localises to the secreted. Inhibited by DFP. In terms of biological role, removes acidic, neutral and basic amino acids as well as proline from the C-terminal position. Digests preferentially peptides containing a hydrophobic residue in P1' position, as well as arginine, lysine or phenylalanine in P1 position of ester substrate. Catalyzes also peptide synthesis. The sequence is that of Carboxypeptidase 1 from Aspergillus niger.